We begin with the raw amino-acid sequence, 488 residues long: 3-octaprenyl-4-hydroxybenzoate carboxy-lyase (488 aa).

N172 is a Mn(2+) binding site. Residues 175 to 177 (IYR), 189 to 191 (RWL), and 194 to 195 (RG) each bind prenylated FMN. E238 serves as a coordination point for Mn(2+). The active-site Proton donor is the D287.

This sequence belongs to the UbiD family. Homohexamer. Prenylated FMN serves as cofactor. Requires Mn(2+) as cofactor.

It is found in the cell membrane. The catalysed reaction is a 4-hydroxy-3-(all-trans-polyprenyl)benzoate + H(+) = a 2-(all-trans-polyprenyl)phenol + CO2. The protein operates within cofactor biosynthesis; ubiquinone biosynthesis. Catalyzes the decarboxylation of 3-octaprenyl-4-hydroxy benzoate to 2-octaprenylphenol, an intermediate step in ubiquinone biosynthesis. The protein is 3-octaprenyl-4-hydroxybenzoate carboxy-lyase of Pseudomonas fluorescens (strain ATCC BAA-477 / NRRL B-23932 / Pf-5).